Consider the following 209-residue polypeptide: MTKLLMINAHPHTTVPSASLTVAASFKTAYQQTHPHDEITTRDLYQDGVPALNDTTFEAWRKRKYGEELTSVEAELLSRHASWLAEFLAADKIVFVNPMYNHFLPAELKQYLDLTAVARKTFKYTVNGPVGLLPDKHVLHIQAAGGYYHQPDQHNQVEAGDPYLRGMMQLYGIQDYRTIFIEGLDQFPEQREQAITAAQVAAEKLAGEF.

17-19 (SAS) is a binding site for FMN.

This sequence belongs to the azoreductase type 1 family. As to quaternary structure, homodimer. FMN is required as a cofactor.

It carries out the reaction 2 a quinone + NADH + H(+) = 2 a 1,4-benzosemiquinone + NAD(+). The enzyme catalyses N,N-dimethyl-1,4-phenylenediamine + anthranilate + 2 NAD(+) = 2-(4-dimethylaminophenyl)diazenylbenzoate + 2 NADH + 2 H(+). Functionally, quinone reductase that provides resistance to thiol-specific stress caused by electrophilic quinones. Its function is as follows. Also exhibits azoreductase activity. Catalyzes the reductive cleavage of the azo bond in aromatic azo compounds to the corresponding amines. The sequence is that of FMN-dependent NADH:quinone oxidoreductase 2 from Lactiplantibacillus plantarum (strain ATCC BAA-793 / NCIMB 8826 / WCFS1) (Lactobacillus plantarum).